The chain runs to 215 residues: 3-isopropylmalate dehydratase small subunit (215 aa).

It belongs to the LeuD family. LeuD type 1 subfamily. In terms of assembly, heterodimer of LeuC and LeuD.

The catalysed reaction is (2R,3S)-3-isopropylmalate = (2S)-2-isopropylmalate. It functions in the pathway amino-acid biosynthesis; L-leucine biosynthesis; L-leucine from 3-methyl-2-oxobutanoate: step 2/4. Catalyzes the isomerization between 2-isopropylmalate and 3-isopropylmalate, via the formation of 2-isopropylmaleate. In Leptothrix cholodnii (strain ATCC 51168 / LMG 8142 / SP-6) (Leptothrix discophora (strain SP-6)), this protein is 3-isopropylmalate dehydratase small subunit.